The primary structure comprises 150 residues: Protein ADM2 (150 aa).

The N-terminal stretch at 1-25 is a signal peptide; the sequence is MAQLLMVTVTLGCISLLYLLPGTLS. Positions 26-100 are excised as a propeptide; the sequence is GSLGKGLRHS…HPGPQRPTGS (75 aa). Positions 28-102 are disordered; the sequence is LGKGLRHSRP…GPQRPTGSRR (75 aa). Residues cysteine 112 and cysteine 117 are joined by a disulfide bond. The residue at position 149 (tyrosine 149) is a Tyrosine amide.

Belongs to the adrenomedullin family. In terms of tissue distribution, high expression detected in the submaxillary gland, kidney, stomach, and mesentery, followed by the pituitary, lung, pancreas, intestines, spleen, thymus and ovary. Expressed mainly in the intermediate lobe of the pituitary, with sporadic in the anterior lobe.

It localises to the secreted. Functionally, intermedin/ADM2 is a peptide hormone that plays a role as physiological regulator of gastrointestinal and cardiovascular bioactivities mediated by the CALCRL-RAMPs receptor complexes. Activates the cAMP-dependent pathway through interaction with CALCRL-RAMP3 receptor complex. This Mus musculus (Mouse) protein is Protein ADM2.